The following is a 182-amino-acid chain: ATP-dependent protease subunit HslV (182 aa).

T12 is a catalytic residue. Positions 167, 170, and 173 each coordinate Na(+).

It belongs to the peptidase T1B family. HslV subfamily. As to quaternary structure, a double ring-shaped homohexamer of HslV is capped on each side by a ring-shaped HslU homohexamer. The assembly of the HslU/HslV complex is dependent on binding of ATP.

It is found in the cytoplasm. It carries out the reaction ATP-dependent cleavage of peptide bonds with broad specificity.. Allosterically activated by HslU binding. In terms of biological role, protease subunit of a proteasome-like degradation complex believed to be a general protein degrading machinery. This chain is ATP-dependent protease subunit HslV, found in Chlorobium phaeobacteroides (strain BS1).